The primary structure comprises 310 residues: Methionyl-tRNA formyltransferase (310 aa).

109–112 is a (6S)-5,6,7,8-tetrahydrofolate binding site; the sequence is SLLP.

The protein belongs to the Fmt family.

It carries out the reaction L-methionyl-tRNA(fMet) + (6R)-10-formyltetrahydrofolate = N-formyl-L-methionyl-tRNA(fMet) + (6S)-5,6,7,8-tetrahydrofolate + H(+). Its function is as follows. Attaches a formyl group to the free amino group of methionyl-tRNA(fMet). The formyl group appears to play a dual role in the initiator identity of N-formylmethionyl-tRNA by promoting its recognition by IF2 and preventing the misappropriation of this tRNA by the elongation apparatus. This is Methionyl-tRNA formyltransferase from Pseudomonas putida (strain ATCC 47054 / DSM 6125 / CFBP 8728 / NCIMB 11950 / KT2440).